Here is an 81-residue protein sequence, read N- to C-terminus: Large ribosomal subunit protein bL31B (81 aa).

The protein belongs to the bacterial ribosomal protein bL31 family. Type B subfamily. In terms of assembly, part of the 50S ribosomal subunit.

The chain is Large ribosomal subunit protein bL31B from Limosilactobacillus fermentum (strain NBRC 3956 / LMG 18251) (Lactobacillus fermentum).